The primary structure comprises 229 residues: Potassium/proton antiporter CemA (229 aa).

4 consecutive transmembrane segments (helical) span residues 7–27 (FTPL…SLSF), 114–134 (LICF…LLIL), 154–174 (ILLL…ELMI), and 189–209 (IISG…KYWI).

This sequence belongs to the CemA family.

It is found in the plastid. Its subcellular location is the chloroplast inner membrane. The enzyme catalyses K(+)(in) + H(+)(out) = K(+)(out) + H(+)(in). Its function is as follows. Contributes to K(+)/H(+) antiport activity by supporting proton efflux to control proton extrusion and homeostasis in chloroplasts in a light-dependent manner to modulate photosynthesis. Prevents excessive induction of non-photochemical quenching (NPQ) under continuous-light conditions. Indirectly promotes efficient inorganic carbon uptake into chloroplasts. This Gossypium barbadense (Sea Island cotton) protein is Potassium/proton antiporter CemA.